The following is a 154-amino-acid chain: Protein X (154 aa).

A mitochondrial targeting sequence region spans residues 68–117 (PCALRFTSARRMETTVNAHQVLPKVLYKRTLGLSAMSTTDLEAYFKDCLF).

The protein belongs to the orthohepadnavirus protein X family. As to quaternary structure, may form homodimer. May interact with host CEBPA, CFLAR, CREB1, DDB1, E4F1, HBXIP, HSPD1/HSP60, NFKBIA, POLR2E and SMAD4. Interacts with host SMC5-SMC6 complex and induces its degradation. Interacts with host TRPC4AP; leading to prevent ubiquitination of TRPC4AP. Interacts with host PLSCR1; this interaction promotes ubiquitination and degradation of HBx and impairs HBx-mediated cell proliferation. Post-translationally, a fraction may be phosphorylated in insect cells and HepG2 cells, a human hepatoblastoma cell line. Phosphorylated in vitro by host protein kinase C or mitogen-activated protein kinase. N-acetylated in insect cells.

It is found in the host cytoplasm. It localises to the host nucleus. The protein resides in the host mitochondrion. Multifunctional protein that plays a role in silencing host antiviral defenses and promoting viral transcription. Does not seem to be essential for HBV infection. May be directly involved in development of cirrhosis and liver cancer (hepatocellular carcinoma). Most of cytosolic activities involve modulation of cytosolic calcium. The effect on apoptosis is controversial depending on the cell types in which the studies have been conducted. May induce apoptosis by localizing in mitochondria and causing loss of mitochondrial membrane potential. May also modulate apoptosis by binding host CFLAR, a key regulator of the death-inducing signaling complex (DISC). Promotes viral transcription by using the host E3 ubiquitin ligase DDB1 to target the SMC5-SMC6 complex to proteasomal degradation. This host complex would otherwise bind to viral episomal DNA, and prevents its transcription. Moderately stimulates transcription of many different viral and cellular transcription elements. Promoters and enhancers stimulated by HBx contain DNA binding sites for NF-kappa-B, AP-1, AP-2, c-EBP, ATF/CREB, or the calcium-activated factor NF-AT. In Homo sapiens (Human), this protein is Protein X.